The sequence spans 217 residues: MAHSIWHEKIKSFLPEHYYGRINHFLDEAYASGLVYPPRENVFKALQVTPLEETKVLILGQDPYHGPKQAQGLSFSVPEEISAPPSLINILKELADDIGPRDHHDLSTWASQGVLLLNACLTVPAGQANGHAGLIWEPFTDAVIKVLNEKDSPVVFILWGAYARKKKAFITNPKHHIIESPHPSPLSSYRGFFGSKPFSRTNAILEKEGMTGIDWLQ.

Catalysis depends on D62, which acts as the Proton acceptor.

The protein belongs to the uracil-DNA glycosylase (UDG) superfamily. UNG family.

It is found in the cytoplasm. It carries out the reaction Hydrolyzes single-stranded DNA or mismatched double-stranded DNA and polynucleotides, releasing free uracil.. Excises uracil residues from the DNA which can arise as a result of misincorporation of dUMP residues by DNA polymerase or due to deamination of cytosine. The protein is Uracil-DNA glycosylase of Streptococcus pyogenes serotype M28 (strain MGAS6180).